We begin with the raw amino-acid sequence, 266 residues long: ES1 protein homolog, mitochondrial (266 aa).

The N-terminal 39 residues, 1-39 (MAAVRVLVSPRLASALLPLSGRHRTTSQRAAIHSSAPRP), are a transit peptide targeting the mitochondrion. N6-acetyllysine occurs at positions 149, 155, and 162. Lys-201 is subject to N6-acetyllysine; alternate. Lys-201 is subject to N6-succinyllysine; alternate. Lys-217 carries the N6-acetyllysine modification. 2 positions are modified to N6-acetyllysine; alternate: Lys-221 and Lys-231. 2 positions are modified to N6-succinyllysine; alternate: Lys-221 and Lys-231.

It belongs to the ES1 family.

It localises to the mitochondrion. The sequence is that of ES1 protein homolog, mitochondrial from Rattus norvegicus (Rat).